The chain runs to 243 residues: 3-deoxy-manno-octulosonate cytidylyltransferase (243 aa).

This sequence belongs to the KdsB family.

The protein resides in the cytoplasm. The enzyme catalyses 3-deoxy-alpha-D-manno-oct-2-ulosonate + CTP = CMP-3-deoxy-beta-D-manno-octulosonate + diphosphate. It functions in the pathway nucleotide-sugar biosynthesis; CMP-3-deoxy-D-manno-octulosonate biosynthesis; CMP-3-deoxy-D-manno-octulosonate from 3-deoxy-D-manno-octulosonate and CTP: step 1/1. The protein operates within bacterial outer membrane biogenesis; lipopolysaccharide biosynthesis. In terms of biological role, activates KDO (a required 8-carbon sugar) for incorporation into bacterial lipopolysaccharide in Gram-negative bacteria. In Bartonella tribocorum (strain CIP 105476 / IBS 506), this protein is 3-deoxy-manno-octulosonate cytidylyltransferase.